The following is a 3179-amino-acid chain: Guanylate cyclase beta (3179 aa).

Residues 1 to 60 lie on the Cytoplasmic side of the membrane; that stretch reads MKTQTLSLMNINGKRKFLGTNNKIYRKVIINPTSEDDIQKFCRNYFRIYNFSLYNFIRRL. Residues 61 to 81 form a helical membrane-spanning segment; that stretch reads ISFDAILVYSLFLTVYIFSEI. The Extracellular portion of the chain corresponds to 82-88; that stretch reads NHGETKK. The helical transmembrane segment at 89–109 threads the bilayer; that stretch reads YLFIDTAISLFFNIILLIVIE. Residues 110–295 lie on the Cytoplasmic side of the membrane; that stretch reads SLFELKKLKD…FCIKMNNIVY (186 aa). The chain crosses the membrane as a helical span at residues 296–316; sequence YLIFMYFVFVVLSIVIKTIFF. Topologically, residues 317 to 328 are extracellular; that stretch reads HKKNSFQNSRDS. A helical membrane pass occupies residues 329–349; sequence FLSMLEDFVGLYILVLPIMMY. Over 350–988 the chain is Cytoplasmic; it reads SEKSLIYIIQ…GRLNRFSLCK (639 aa). A helical membrane pass occupies residues 989-1009; it reads VFLWIIYLKITVVSFYFFHNF. The Extracellular segment spans residues 1010–1020; the sequence is DNYFSGSSASS. A helical transmembrane segment spans residues 1021 to 1041; it reads ILYTQTTFALLHYFLIIAFSA. The Cytoplasmic segment spans residues 1042–1069; sequence YEIDLPYKFVRRLPYIYQLSRRKYFLNN. The helical transmembrane segment at 1070 to 1090 threads the bilayer; sequence NIILLTIIEAILISLTSYYIL. Residues 1091 to 1102 are Extracellular-facing; that stretch reads RLNVFHLITHRE. A helical membrane pass occupies residues 1103 to 1123; it reads FTFHIFILNVFITTEKILLLS. Topologically, residues 1124-1127 are cytoplasmic; sequence KTWH. The helical transmembrane segment at 1128–1148 threads the bilayer; that stretch reads IYFFIMAVLIIGILLIYVNIF. At 1149–1168 the chain is on the extracellular side; it reads TLVDCIKNGKCEFSLFQMEN. The helical transmembrane segment at 1169–1189 threads the bilayer; the sequence is IYFWTSLFPILYINFIFDKLM. Residues 1190-1304 lie on the Cytoplasmic side of the membrane; that stretch reads KYIKNRIYPD…YEKGNKLKLR (115 aa). A helical transmembrane segment spans residues 1305 to 1325; sequence IIVILLFLIYIIIFSSQTIID. Residues 1326-1331 are Extracellular-facing; the sequence is INTKSN. Residues 1332 to 1352 form a helical membrane-spanning segment; that stretch reads IHYITMFYIIYFVLACVLLIY. The Cytoplasmic segment spans residues 1353–1360; the sequence is IRIRNKAT. Residues 1361–1381 traverse the membrane as a helical segment; that stretch reads STFFFFLSRFLLICGFCIELY. Topologically, residues 1382-1401 are extracellular; that stretch reads DNISNDILNVLITYSFTVSY. N1383 carries an N-linked (GlcNAc...) asparagine glycan. The helical transmembrane segment at 1402–1422 threads the bilayer; it reads IFFMSFKILEALLVCISILLL. Topologically, residues 1423-1464 are cytoplasmic; that stretch reads TFGVYYEKNKNMIDICTHFCSNPYLSINNLDHMNISCLCKKQ. The chain crosses the membrane as a helical span at residues 1465–1485; sequence IVIFLISLLSFTLICLSMKYY. Topologically, residues 1486-1507 are extracellular; it reads EIFYLKKKFLFRYKQKVNLAKQ. A helical transmembrane segment spans residues 1508–1528; sequence IEILHTMLPNFLVEYLLISDP. Residues 1529 to 2739 lie on the Cytoplasmic side of the membrane; it reads KNDGIMVGKN…IINIDLTKKL (1211 aa). Residues 1548–1700 form the Guanylate cyclase 1 domain; that stretch reads SVIFCDIDDF…DTVNTASRMK (153 aa). Disordered stretches follow at residues 2123-2153, 2355-2379, and 2576-2656; these read LHNY…YTSS, SINK…KDKK, and KDSD…HHHS. Positions 2131–2142 are enriched in basic residues; the sequence is NKNKNKKNNKNV. Residues 2584-2607 show a composition bias toward low complexity; sequence NNNKISKNRYNNNNNNNNSNYSNI. The span at 2614-2645 shows a compositional bias: basic residues; the sequence is HNNKKNHHHNNNKYHHHNNNKYHHHNNNKYHH. The chain crosses the membrane as a helical span at residues 2740–2760; it reads IIIFIFTEIFLSLCNIIELSF. The Extracellular segment spans residues 2761–2770; that stretch reads YEKKLRYNDS. The N-linked (GlcNAc...) asparagine glycan is linked to N2768. The helical transmembrane segment at 2771–2791 threads the bilayer; that stretch reads IVIIWLIRSIYLFIITYIWII. Topologically, residues 2792–2809 are cytoplasmic; the sequence is LKTKLKEYKNNSSKMMWT. A helical membrane pass occupies residues 2810–2830; it reads IFILNIFLCSWGIILIDLSCI. Topologically, residues 2831–2842 are extracellular; that stretch reads HYSMLLGNKNER. Residues 2843–2863 form a helical membrane-spanning segment; sequence ALFFMKDASELIICIQLIFIK. Residues 2864-2870 are Cytoplasmic-facing; it reads NMLFKHK. Residues 2871 to 2891 traverse the membrane as a helical segment; the sequence is FFFFVFFYIFLIYSFSKLFSI. Residues 2892–2895 are Extracellular-facing; it reads HTCQ. A helical transmembrane segment spans residues 2896–2916; the sequence is THICCSIILFISINILYFWYS. The Cytoplasmic portion of the chain corresponds to 2917-3179; it reads EYLDRIQFLV…KLRQKKGLRS (263 aa). A Guanylate cyclase 2 domain is found at 2968–3102; sequence AFLFADIVGF…LDVLIANKIE (135 aa). The Mg(2+) site is built by D2973, I2974, and D3017.

This sequence in the N-terminal section; belongs to the cation transport ATPase (P-type) (TC 3.A.3) family. Type IV subfamily. In the C-terminal section; belongs to the adenylyl cyclase class-4/guanylyl cyclase family. The cofactor is Mg(2+). Mn(2+) is required as a cofactor.

Its subcellular location is the membrane. It catalyses the reaction GTP = 3',5'-cyclic GMP + diphosphate. Basal guanylate activity of the recombinant guanylate cyclase domains 1 and 2 is not modulated by an increase in Ca(2+) levels or by the gametogenesis inducer xanthurenic acid. Functionally, catalyzes the synthesis of the second messenger cGMP from GTP. Regulates cGMP production in gametocytes; however, is dispensable for the initiation of gametogenesis. Does not have adenylate cyclase activity. The polypeptide is Guanylate cyclase beta (Plasmodium falciparum (isolate 3D7)).